Here is a 313-residue protein sequence, read N- to C-terminus: Putative HTH-type transcriptional regulatory protein Msm_0453 (313 aa).

Positions 131 to 189 constitute an HTH cro/C1-type domain; sequence IKQYREEYSLSLKDLADLAHVSRATMYKYENEIVRANTETAMILEEILNTKVTLDIDLL. Positions 142–161 form a DNA-binding region, H-T-H motif; sequence LKDLADLAHVSRATMYKYEN.

The sequence is that of Putative HTH-type transcriptional regulatory protein Msm_0453 from Methanobrevibacter smithii (strain ATCC 35061 / DSM 861 / OCM 144 / PS).